A 634-amino-acid polypeptide reads, in one-letter code: Knob-associated histidine-rich protein (634 aa).

The first 34 residues, 1–34 (MKSFKNKNTLRRKKAFPVFTKILLVSFLVWVLKC), serve as a signal peptide directing secretion. Residue N42 is glycosylated (N-linked (GlcNAc...) asparagine). Basic residues predominate over residues 57-87 (AQKQHEHHHHHHHQHQHQHQAPHQAHHHHHH). Disordered stretches follow at residues 57 to 143 (AQKQ…QVFR) and 347 to 634 (SSVN…GCCG). A compositionally biased stretch (low complexity) spans 95-104 (PQVHQQVHGQ). Basic residues predominate over residues 108 to 117 (HHHHHHHHHQ). 2 stretches are compositionally biased toward basic and acidic residues: residues 354-375 (KHGDEKHHSSKKHEGNDGEGEK) and 396-405 (KDNEDAESVK). A compositionally biased stretch (basic residues) spans 406-422 (SKKHKSHDCEKKKSKKH). Composition is skewed to basic and acidic residues over residues 423–444 (KDNEDAESVKSKKSVKEKGEKH) and 453–493 (KTNE…KKVD). Residues 494–505 (STSADNKSTNAA) show a composition bias toward polar residues. Positions 509-520 (AKDKTQGGKTDK) are enriched in basic and acidic residues. 4 tandem repeats follow at residues 540 to 549 (TKGATKEAST), 550 to 559 (SKEATKEAST), 560 to 569 (SKGATKEAST), and 570 to 579 (TEGATKGAST). The segment at 540 to 580 (TKGATKEASTSKEATKEASTSKGATKEASTTEGATKGASTT) is 4 X 10 AA tandem repeats of [TS]-[KE]-[GE]-A-T-K-[EG]-A-S-T. The span at 567 to 591 (ASTTEGATKGASTTAGSTTGATTGA) shows a compositional bias: low complexity. A compositionally biased stretch (polar residues) spans 605-620 (AANNGEQVMSRGQAQL). Residues 625-634 (KKKKKRGCCG) are compositionally biased toward basic residues.

The protein resides in the secreted. Functionally, KAHRP might mimick human histidine-rich glycoproteins to anchor host thrombospondin or a parasite analog in a binding complex with the endothelial cell receptor. The chain is Knob-associated histidine-rich protein from Plasmodium falciparum (isolate FCR-3 / Gambia).